Consider the following 232-residue polypeptide: Large ribosomal subunit protein uL1 (232 aa).

It belongs to the universal ribosomal protein uL1 family. As to quaternary structure, part of the 50S ribosomal subunit.

In terms of biological role, binds directly to 23S rRNA. The L1 stalk is quite mobile in the ribosome, and is involved in E site tRNA release. Protein L1 is also a translational repressor protein, it controls the translation of the L11 operon by binding to its mRNA. This chain is Large ribosomal subunit protein uL1, found in Christiangramia forsetii (strain DSM 17595 / CGMCC 1.15422 / KT0803) (Gramella forsetii).